The chain runs to 162 residues: Lipoprotein signal peptidase (162 aa).

2 consecutive transmembrane segments (helical) span residues 66–86 (PFFI…FRKL) and 92–112 (LAAV…IDRV). Active-site residues include Asp119 and Asp137. Residues 132–152 (AFNVADSAICVGVALLALDMI) traverse the membrane as a helical segment.

This sequence belongs to the peptidase A8 family.

The protein localises to the cell inner membrane. The enzyme catalyses Release of signal peptides from bacterial membrane prolipoproteins. Hydrolyzes -Xaa-Yaa-Zaa-|-(S,diacylglyceryl)Cys-, in which Xaa is hydrophobic (preferably Leu), and Yaa (Ala or Ser) and Zaa (Gly or Ala) have small, neutral side chains.. Its pathway is protein modification; lipoprotein biosynthesis (signal peptide cleavage). This protein specifically catalyzes the removal of signal peptides from prolipoproteins. In Geobacter metallireducens (strain ATCC 53774 / DSM 7210 / GS-15), this protein is Lipoprotein signal peptidase.